The sequence spans 442 residues: D-galactonate dehydratase family member SSBG_02010 (442 aa).

D246 contributes to the Mg(2+) binding site. H248 serves as a coordination point for D-arabinonate. Residues E272 and E298 each contribute to the Mg(2+) site. 4 residues coordinate D-arabinonate: E298, R319, H348, and E375.

It belongs to the mandelate racemase/muconate lactonizing enzyme family. GalD subfamily.

Functionally, has no detectable activity with D-mannonate and with a panel of 70 other acid sugars (in vitro), in spite of the conservation of the residues that are expected to be important for catalytic activity and cofactor binding. May have evolved a divergent function. This Streptomyces sp. (strain SPB074) protein is D-galactonate dehydratase family member SSBG_02010.